An 834-amino-acid chain; its full sequence is Taste receptor type 1 member 2 (834 aa).

Residues Met-1–Ala-19 form the signal peptide. Residues Glu-20–Thr-561 are Extracellular-facing. Asn-84, Asn-292, Asn-312, Asn-363, Asn-423, Asn-482, and Asn-522 each carry an N-linked (GlcNAc...) asparagine glycan. Residues Ile-562–Xaa-582 form a helical membrane-spanning segment. The Cytoplasmic segment spans residues Xaa-583–Pro-597. The chain crosses the membrane as a helical span at residues Met-598 to Gly-618. The Extracellular portion of the chain corresponds to Pro-619–Ala-630. Residues Leu-631–Val-651 traverse the membrane as a helical segment. The Cytoplasmic segment spans residues Cys-652–Ser-676. The helical transmembrane segment at Val-677–Leu-697 threads the bilayer. Topologically, residues Asn-698–Ser-722 are extracellular. The chain crosses the membrane as a helical span at residues Leu-723–Met-743. The Cytoplasmic portion of the chain corresponds to Gly-744–Lys-755. Residues Phe-756 to Ser-776 form a helical membrane-spanning segment. Topologically, residues Val-777–Asp-779 are extracellular. A helical membrane pass occupies residues Gly-780–Leu-800. At Gly-801–Asp-834 the chain is on the cytoplasmic side.

The protein belongs to the G-protein coupled receptor 3 family. TAS1R subfamily. In terms of assembly, forms heterodimers with TAS1R3.

It localises to the cell membrane. Functionally, putative taste receptor. TAS1R2/TAS1R3 recognizes diverse natural and synthetic sweeteners. The protein is Taste receptor type 1 member 2 (TAS1R2) of Cebuella pygmaea (Pygmy marmoset).